The following is a 236-amino-acid chain: uncharacterized protein (236 aa).

The protein belongs to the HyuE racemase family.

It is found in the cytoplasm. This is an uncharacterized protein from Schizosaccharomyces pombe (strain 972 / ATCC 24843) (Fission yeast).